Reading from the N-terminus, the 64-residue chain is Large ribosomal subunit protein bL35 (64 aa).

The protein belongs to the bacterial ribosomal protein bL35 family.

The polypeptide is Large ribosomal subunit protein bL35 (Acinetobacter baumannii (strain AB307-0294)).